A 680-amino-acid chain; its full sequence is WD repeat-containing protein 48 homolog (680 aa).

WD repeat units lie at residues 26–65 (QHRN…SEKY), 71–110 (HHND…CMST), 113–152 (THRD…ALTA), 164–203 (GSKD…RSMK), 206–245 (GHTE…CVQT), 248–287 (VHKE…NKTL), 290–329 (EEKA…RGTL), and 350–389 (KGGA…KKDT). A disordered region spans residues 594 to 618 (TPSGANANNSLQNSQSDGNSEGSQL). The span at 596 to 609 (SGANANNSLQNSQS) shows a compositional bias: low complexity.

This sequence belongs to the WD repeat WDR48 family. As to quaternary structure, catalytic component of the Usp12-46 deubiquitylase complex consisting of Usp12-46, Wdr20 and Uaf1; regulatory subunit that, together wtih Wdr20, stabilizes Usp12-46. The Usp12-46 deubiquitylase complex associates with arr/arrow; the interaction leads to deubiquitination and stabilization of arr/arrow.

Regulatory component of the Usp12-46 deubiquitylase complex. activates deubiquitination by increasing the catalytic turnover without increasing the affinity of deubiquitinating enzymes for the substrate. The complex deubiquitylates the wg/wingless-signaling receptor arr/arrow, which stabilizes the receptor and increases its concentration at the cell surface; this enhances the sensitivity of cells to wg/wingless-signal stimulation. This increases the amplitude and spatial range of the signaling response to the wg/wingless morphogen gradient, facilitating the precise concentration-dependent regulation of its target genes. Together with Wdr20 and Usp12-46 required for wg/wingless-mediated signaling in the wing imaginal disc and for wg/wingless-dependent regulation of intestinal stem cell proliferation. This chain is WD repeat-containing protein 48 homolog, found in Drosophila persimilis (Fruit fly).